The sequence spans 700 residues: Probable pre-mRNA-splicing factor ATP-dependent RNA helicase DEAH4 (700 aa).

Ala-2 carries the N-acetylalanine modification. Positions 14 to 178 (VETVEKNSVV…FSGCPVLNVP (165 aa)) constitute a Helicase ATP-binding domain. 27-34 (GETGSGKS) is an ATP binding site. Positions 124 to 127 (DEAH) match the DEAH box motif. The region spanning 200–377 (SLKVAIDIHV…GSVLYLKSLD (178 aa)) is the Helicase C-terminal domain. 2 disordered regions span residues 463–486 (PARS…NGSG) and 654–682 (GPAP…SENV).

The protein belongs to the DEAD box helicase family. DEAH subfamily. PRP22 sub-subfamily.

It carries out the reaction ATP + H2O = ADP + phosphate + H(+). In terms of biological role, may be involved in pre-mRNA splicing. This is Probable pre-mRNA-splicing factor ATP-dependent RNA helicase DEAH4 from Arabidopsis thaliana (Mouse-ear cress).